We begin with the raw amino-acid sequence, 511 residues long: Cobyric acid synthase (511 aa).

The region spanning 251–443 (LLDIAIICLP…IHGIFDNDVF (193 aa)) is the GATase cobBQ-type domain. The active-site Nucleophile is Cys332. The active site involves His435.

This sequence belongs to the CobB/CobQ family. CobQ subfamily.

It functions in the pathway cofactor biosynthesis; adenosylcobalamin biosynthesis. Functionally, catalyzes amidations at positions B, D, E, and G on adenosylcobyrinic A,C-diamide. NH(2) groups are provided by glutamine, and one molecule of ATP is hydrogenolyzed for each amidation. This is Cobyric acid synthase from Listeria monocytogenes serotype 4a (strain HCC23).